Here is a 241-residue protein sequence, read N- to C-terminus: MRSGVIAQKVGMTRIFTDAGEHVPVTVLKVESCQVVAHRTLDKNGYVAVQLGAGRRKPKNVTRAERGHFAVAQVEPKHKLAEFRVPEEALIPVGAEITADHFVVGQYVDVTGTTIGKGFAGGMKRHNFGGLRATHGVSISHRSIGSTGGRQDPGKTFKNKKMPGHMGDVTVTTQNLKVVMTDVERGLIAVEGAVPGHAGGWITVRDAVKKKLPAEAPKPGAFKLNGSEAAPAAEAVNEEGA.

Disordered regions lie at residues 140-168 (SHRSIGSTGGRQDPGKTFKNKKMPGHMGD) and 216-241 (APKPGAFKLNGSEAAPAAEAVNEEGA). Glutamine 151 carries the N5-methylglutamine modification.

The protein belongs to the universal ribosomal protein uL3 family. As to quaternary structure, part of the 50S ribosomal subunit. Forms a cluster with proteins L14 and L19. Post-translationally, methylated by PrmB.

Functionally, one of the primary rRNA binding proteins, it binds directly near the 3'-end of the 23S rRNA, where it nucleates assembly of the 50S subunit. The chain is Large ribosomal subunit protein uL3 from Xanthobacter autotrophicus (strain ATCC BAA-1158 / Py2).